The chain runs to 61 residues: Small ribosomal subunit protein uS14 (61 aa).

4 residues coordinate Zn(2+): Cys24, Cys27, Cys40, and Cys43.

This sequence belongs to the universal ribosomal protein uS14 family. Zinc-binding uS14 subfamily. In terms of assembly, part of the 30S ribosomal subunit. Contacts proteins S3 and S10. The cofactor is Zn(2+).

In terms of biological role, binds 16S rRNA, required for the assembly of 30S particles and may also be responsible for determining the conformation of the 16S rRNA at the A site. The sequence is that of Small ribosomal subunit protein uS14 from Borrelia duttonii (strain Ly).